The primary structure comprises 450 residues: Divalent metal cation transporter MntH (450 aa).

11 helical membrane passes run 44–64, 77–97, 121–141, 152–172, 181–201, 218–238, 273–293, 310–330, 366–386, 387–407, and 419–439; these read LLAF…PGNW, TLLS…SLAA, FLLW…EVIG, IPLI…LLLM, AFVI…IVAA, IFTN…TVMP, IALM…AATF, LLSP…ALLA, GIAI…GTAD, LLVF…IPLV, and FAIS…IVVL.

Belongs to the NRAMP family.

It localises to the cell inner membrane. Its function is as follows. H(+)-stimulated, divalent metal cation uptake system. The sequence is that of Divalent metal cation transporter MntH from Bradyrhizobium diazoefficiens (strain JCM 10833 / BCRC 13528 / IAM 13628 / NBRC 14792 / USDA 110).